The following is a 219-amino-acid chain: Claudin-3 (219 aa).

At 1 to 8 (MSMGLEIT) the chain is on the cytoplasmic side. The helical transmembrane segment at 9–29 (GTSLAVLGWLCTIVCCALPMW) threads the bilayer. Topologically, residues 30-80 (RVSAFIGSSIITAQITWEGLWMNCVVQSTGQMQCKMYDSLLALPQDLQAAR) are extracellular. A helical transmembrane segment spans residues 81–101 (ALIVVSILLAAFGLLVALVGA). At 102–115 (QCTNCVQDETAKAK) the chain is on the cytoplasmic side. The helical transmembrane segment at 116 to 136 (ITIVAGVLFLLAAVLTLVPVS) threads the bilayer. Topologically, residues 137 to 161 (WSANTIIRDFYNPLVPEAQKREMGT) are extracellular. A helical membrane pass occupies residues 162-182 (GLYVGWAAAALQLLGGALLCC). The Cytoplasmic portion of the chain corresponds to 183–219 (SCPPREKYAPTKILYSAPRSTGPGTGTGTAYDRKDYV). A Phosphotyrosine modification is found at tyrosine 197. Serine 198 is modified (phosphoserine). The tract at residues 218-219 (YV) is interactions with TJP1, TJP2 and TJP3.

This sequence belongs to the claudin family. Can form homo- and heteropolymers with other CLDN. Homopolymers interact with CLDN1 and CLDN2 homopolymers. Interacts in cis (within the same plasma membrane) with CLDN19. Directly interacts with TJP1/ZO-1, TJP2/ZO-2 and TJP3/ZO-3.

Its subcellular location is the cell junction. The protein localises to the tight junction. It is found in the cell membrane. Plays a major role in tight junction-specific obliteration of the intercellular space, through calcium-independent cell-adhesion activity. This is Claudin-3 (Cldn3) from Rattus norvegicus (Rat).